The sequence spans 237 residues: UPF0502 protein HEAR1280 (237 aa).

The span at methionine 1–serine 13 shows a compositional bias: polar residues. The interval methionine 1–alanine 21 is disordered.

This sequence belongs to the UPF0502 family.

The chain is UPF0502 protein HEAR1280 from Herminiimonas arsenicoxydans.